Reading from the N-terminus, the 502-residue chain is TGF-beta-activated kinase 1 and MAP3K7-binding protein 1 (502 aa).

A disordered region spans residues 1–21 (MAAQRRSLLQSEQQPSWTDDL). Position 7 is a phosphoserine (Ser-7). Residues 7 to 17 (SLLQSEQQPSW) are compositionally biased toward polar residues. Positions 28 to 365 (GVGSASNRSY…EDMTLLVRNF (338 aa)) constitute a PPM-type phosphatase domain. Ser-393 carries O-linked (GlcNAc) serine glycosylation. Polar residues predominate over residues 414–437 (QMVNGSHSASTLDEATPTLTNQSP). The segment at 414–476 (QMVNGSHSAS…SLPPGEDGRV (63 aa)) is disordered. Phosphoserine is present on Ser-421. The residue at position 429 (Thr-429) is a Phosphothreonine. Ser-436 carries the post-translational modification Phosphoserine. The span at 438–455 (TLTLQSTNTHTQSSSSSS) shows a compositional bias: low complexity. Residue Thr-440 is modified to Phosphothreonine.

As to quaternary structure, interacts with XIAP and BIRC7. Interacts with TRAF6 and MAP3K7; during IL-1 signaling. Identified in the TRIKA2 complex composed of MAP3K7, TAB1 and TAB2. Interacts with TRAF6 and MAPK14; these interactions allow MAPK14 autophosphorylation. Interacts with STING1; interaction takes place following cGAMP activation and promotes TAB1 recruitment to the endoplasmic reticulum, triggering MAP3K7/TAK1 activation and STING1 phosphorylation. In terms of processing, phosphorylated at all three sites Ser-421, Thr-429 and Ser-436 by MAPK14 when cells were exposed to cellular stresses, or stimulated with TNF-alpha, IL1 or LPS. These phosphorylations inhibit TAK1 activation by a feedback control mechanism. Dephosphorylated by DUSP14 at Ser-436, leading to TAB1-MAP3K7/TAK1 complex inactivation in T-cells. Ubiquitinated by MAP3K1 with 'Lys-63'-linked polyubiquitin; leading to activation of TAK1 and of JNK and p38 MAP kinases following EGF and TGF-beta stimulation. Ubiquitinated by ITCH with 'Lys-48'-linked polyubiquitin; leading to proteasomal degradation. Ubiquitinated by RNF114 during maternal-to-zygotic transition; leading to degradation. Post-translationally, O-GlcNAcylated at Ser-393 is required for full MAP3K7/TAK1 activation upon stimulation with IL-1 or osmotic stress.

The protein resides in the cytoplasm. It is found in the cytosol. Its subcellular location is the endoplasmic reticulum membrane. In terms of biological role, key adapter protein that plays an essential role in JNK and NF-kappa-B activation and proinflammatory cytokines production in response to stimulation with TLRs and cytokines. Mechanistically, associates with the catalytic domain of MAP3K7/TAK1 to trigger MAP3K7/TAK1 autophosphorylation leading to its full activation. Similarly, associates with MAPK14 and triggers its autophosphorylation and subsequent activation. In turn, MAPK14 phosphorylates TAB1 and inhibits MAP3K7/TAK1 activation in a feedback control mechanism. Also plays a role in recruiting MAPK14 to the TAK1 complex for the phosphorylation of the TAB2 and TAB3 regulatory subunits. The polypeptide is TGF-beta-activated kinase 1 and MAP3K7-binding protein 1 (Tab1) (Mus musculus (Mouse)).